The primary structure comprises 308 residues: Protoheme IX farnesyltransferase (308 aa).

The next 8 helical transmembrane spans lie at 31–51, 53–73, 102–122, 124–144, 149–169, 170–190, 240–260, and 288–308; these read VIEL…RGTV, PLLI…ANAL, NALV…WWTT, LLSG…YTLL, TSQN…IGWS, AVTG…FFWT, LALA…VWFL, and YLAV…PHLF.

This sequence belongs to the UbiA prenyltransferase family. Protoheme IX farnesyltransferase subfamily.

It localises to the cell membrane. It catalyses the reaction heme b + (2E,6E)-farnesyl diphosphate + H2O = Fe(II)-heme o + diphosphate. It participates in porphyrin-containing compound metabolism; heme O biosynthesis; heme O from protoheme: step 1/1. Functionally, converts heme B (protoheme IX) to heme O by substitution of the vinyl group on carbon 2 of heme B porphyrin ring with a hydroxyethyl farnesyl side group. In Mycolicibacterium paratuberculosis (strain ATCC BAA-968 / K-10) (Mycobacterium paratuberculosis), this protein is Protoheme IX farnesyltransferase.